Reading from the N-terminus, the 380-residue chain is Crotonobetainyl-CoA reductase (380 aa).

Belongs to the acyl-CoA dehydrogenase family. As to quaternary structure, homotetramer. FAD serves as cofactor.

It is found in the cytoplasm. The catalysed reaction is 4-(trimethylamino)butanoyl-CoA + oxidized [electron-transfer flavoprotein] + H(+) = crotonobetainyl-CoA + reduced [electron-transfer flavoprotein]. It participates in amine and polyamine metabolism; carnitine metabolism. Functionally, catalyzes the reduction of crotonobetainyl-CoA to gamma-butyrobetainyl-CoA. This Salmonella agona (strain SL483) protein is Crotonobetainyl-CoA reductase.